A 294-amino-acid polypeptide reads, in one-letter code: 4-hydroxybenzoate octaprenyltransferase (294 aa).

The next 8 membrane-spanning stretches (helical) occupy residues 20–42 (LLRI…ALWL), 98–118 (WEAV…VVLF), 120–140 (NTLT…YPFM), 145–165 (HLPQ…AWAA), 175–195 (WLLF…YAMV), 218–238 (AIIA…GQRA), 242–262 (SFYY…QYLA), and 274–294 (FLNN…DLAF).

Belongs to the UbiA prenyltransferase family. Mg(2+) serves as cofactor.

It localises to the cell inner membrane. It catalyses the reaction all-trans-octaprenyl diphosphate + 4-hydroxybenzoate = 4-hydroxy-3-(all-trans-octaprenyl)benzoate + diphosphate. It participates in cofactor biosynthesis; ubiquinone biosynthesis. Catalyzes the prenylation of para-hydroxybenzoate (PHB) with an all-trans polyprenyl group. Mediates the second step in the final reaction sequence of ubiquinone-8 (UQ-8) biosynthesis, which is the condensation of the polyisoprenoid side chain with PHB, generating the first membrane-bound Q intermediate 3-octaprenyl-4-hydroxybenzoate. The protein is 4-hydroxybenzoate octaprenyltransferase of Marinobacter nauticus (strain ATCC 700491 / DSM 11845 / VT8) (Marinobacter aquaeolei).